The sequence spans 422 residues: Tk-subtilisin (422 aa).

The N-terminal stretch at methionine 1–alanine 24 is a signal peptide. Residues glycine 25–proline 106 constitute a propeptide that is removed on maturation. One can recognise a Peptidase S8 domain in the interval proline 111–valine 417. Active-site charge relay system residues include aspartate 139, histidine 177, and serine 348.

It belongs to the peptidase S8 family. Monomer. The cofactor is Ca(2+).

The protein localises to the secreted. Its function is as follows. Has a broad substrate specificity with a slight preference to large hydrophobic amino acid residues at the P1 position. The chain is Tk-subtilisin from Thermococcus kodakarensis (strain ATCC BAA-918 / JCM 12380 / KOD1) (Pyrococcus kodakaraensis (strain KOD1)).